The sequence spans 223 residues: TMF-regulated nuclear protein 1 (223 aa).

Disordered stretches follow at residues 1-84 (MPGC…GPAG) and 196-223 (GRLR…SPQR). The span at 21-54 (GSPPPPPREPLPSLQPPSPSPTSTPTPTKSPPLP) shows a compositional bias: pro residues. The segment covering 73–84 (ASGGSGGAGPAG) has biased composition (gly residues).

Interacts with TMF1; may regulate TRNP1 proteasomal degradation. In terms of processing, ubiquitinated, leading to its degradation by the proteasome. Expressed in brain and kidney (at protein level). Also detected in spleen and intestine.

It is found in the nucleus. Its function is as follows. DNA-binding factor that regulates the expression of a subset of genes and plays a key role in tangential, radial, and lateral expansion of the brain neocortex. Regulates neural stem cells proliferation and the production of intermediate neural progenitors and basal radial glial cells affecting the process of cerebral cortex gyrification. May control the proliferation rate of cells by regulating their progression through key cell-cycle transition points. The sequence is that of TMF-regulated nuclear protein 1 (Trnp1) from Mus musculus (Mouse).